Here is a 164-residue protein sequence, read N- to C-terminus: UPF0304 protein KPK_1463 (164 aa).

This sequence belongs to the UPF0304 family.

This is UPF0304 protein KPK_1463 from Klebsiella pneumoniae (strain 342).